A 202-amino-acid polypeptide reads, in one-letter code: Glycerol-3-phosphate acyltransferase (202 aa).

A run of 6 helical transmembrane segments spans residues 2-22 (INLLFAVIAYLIGSVSFAVVV), 51-71 (KAAIFTLIGDALKGLAAVLLA), 80-100 (VDETGIALVALAVFLGHLFPL), 116-136 (ILFAIDPILGAGTLATWLIIA), 137-157 (FFFRYSSLAALISAIFAPFFY), and 158-178 (VLMNGVDIMAGAILVISVLLI).

It belongs to the PlsY family. Probably interacts with PlsX.

It localises to the cell inner membrane. It catalyses the reaction an acyl phosphate + sn-glycerol 3-phosphate = a 1-acyl-sn-glycero-3-phosphate + phosphate. Its pathway is lipid metabolism; phospholipid metabolism. Its function is as follows. Catalyzes the transfer of an acyl group from acyl-phosphate (acyl-PO(4)) to glycerol-3-phosphate (G3P) to form lysophosphatidic acid (LPA). This enzyme utilizes acyl-phosphate as fatty acyl donor, but not acyl-CoA or acyl-ACP. This is Glycerol-3-phosphate acyltransferase from Cupriavidus metallidurans (strain ATCC 43123 / DSM 2839 / NBRC 102507 / CH34) (Ralstonia metallidurans).